The following is a 645-amino-acid chain: Threonine--tRNA ligase (645 aa).

The 63-residue stretch at 1-63 folds into the TGS domain; the sequence is MEQINIQFPD…ETDGSIEIVT (63 aa). The tract at residues 242 to 540 is catalytic; the sequence is DHRKIGKELE…LTEETKGAFP (299 aa). Zn(2+) is bound by residues Cys336, His387, and His517.

It belongs to the class-II aminoacyl-tRNA synthetase family. In terms of assembly, homodimer. The cofactor is Zn(2+).

It is found in the cytoplasm. It catalyses the reaction tRNA(Thr) + L-threonine + ATP = L-threonyl-tRNA(Thr) + AMP + diphosphate + H(+). Functionally, catalyzes the attachment of threonine to tRNA(Thr) in a two-step reaction: L-threonine is first activated by ATP to form Thr-AMP and then transferred to the acceptor end of tRNA(Thr). Also edits incorrectly charged L-seryl-tRNA(Thr). In Staphylococcus aureus (strain JH1), this protein is Threonine--tRNA ligase.